The sequence spans 131 residues: uncharacterized protein (131 aa).

The HTH hxlR-type domain maps to 26 to 124; that stretch reads CSVEVAVNEI…WGKMYGSHQE (99 aa).

This is an uncharacterized protein from Methanothermobacter thermautotrophicus (strain ATCC 29096 / DSM 1053 / JCM 10044 / NBRC 100330 / Delta H) (Methanobacterium thermoautotrophicum).